The chain runs to 256 residues: Small ribosomal subunit protein eS1 (256 aa).

A2 carries the N-acetylalanine; partial modification.

This sequence belongs to the eukaryotic ribosomal protein eS1 family. As to quaternary structure, component of the small ribosomal subunit. Mature ribosomes consist of a small (40S) and a large (60S) subunit. The 40S subunit contains about 33 different proteins and 1 molecule of RNA (18S). The 60S subunit contains about 49 different proteins and 3 molecules of RNA (25S, 5.8S and 5S).

It is found in the cytoplasm. This Meyerozyma guilliermondii (strain ATCC 6260 / CBS 566 / DSM 6381 / JCM 1539 / NBRC 10279 / NRRL Y-324) (Yeast) protein is Small ribosomal subunit protein eS1.